The chain runs to 285 residues: Probable endonuclease 4 (285 aa).

Zn(2+) is bound by residues His-69, His-109, Glu-145, Asp-179, His-182, His-216, Asp-229, His-231, and Glu-261.

It belongs to the AP endonuclease 2 family. The cofactor is Zn(2+).

The enzyme catalyses Endonucleolytic cleavage to 5'-phosphooligonucleotide end-products.. In terms of biological role, endonuclease IV plays a role in DNA repair. It cleaves phosphodiester bonds at apurinic or apyrimidinic (AP) sites, generating a 3'-hydroxyl group and a 5'-terminal sugar phosphate. This Salmonella paratyphi A (strain AKU_12601) protein is Probable endonuclease 4.